Reading from the N-terminus, the 126-residue chain is C-type natriuretic peptide (126 aa).

The signal sequence occupies residues methionine 1–alanine 23. The disordered stretch occupies residues proline 20–leucine 71. Positions lysine 24 to arginine 73 are excised as a propeptide. A compositionally biased stretch (gly residues) spans alanine 46–alanine 62. A disulfide bridge connects residues cysteine 110 and cysteine 126.

This sequence belongs to the natriuretic peptide family. Post-translationally, degraded by IDE (in vitro).

The protein resides in the secreted. In terms of biological role, hormone which plays a role in endochondral ossification through regulation of cartilaginous growth plate chondrocytes proliferation and differentiation. May also be vasoactive and natriuretic. Acts by specifically binding and stimulating NPR2 to produce cGMP. Binds the clearance receptor NPR3. The polypeptide is C-type natriuretic peptide (NPPC) (Bos taurus (Bovine)).